Reading from the N-terminus, the 1166-residue chain is Serine-aspartate repeat-containing protein E (1166 aa).

Positions 1 to 52 are cleaved as a signal peptide; the sequence is MINRDNKKAITKKGMISNRLNKFSIRKYTVGTASILVGTTLIFGLGNQEAKA. The YSIRK-G/S signaling motif motif lies at 23-34; it reads FSIRKYTVGTAS. The tract at residues 53-606 is ligand binding A region; it reads AENTSTENAK…GDGTVKPEEK (554 aa). The tract at residues 54–230 is disordered; it reads ENTSTENAKQ…SKEELKNNPE (177 aa). A compositionally biased stretch (basic and acidic residues) spans 61-75; that stretch reads AKQDDATTSDNKEVV. A compositionally biased stretch (low complexity) spans 77 to 90; that stretch reads ETENNSTTENNSTN. Positions 92–108 are enriched in basic and acidic residues; that stretch reads IKKETNTDSQPEAKKES. Residues 118–129 are compositionally biased toward polar residues; it reads NNVTATTETKPQ. Residues 130–145 show a composition bias toward basic and acidic residues; sequence NIEKENVKPSTDKTAT. Residues 166–178 are compositionally biased toward low complexity; sequence TTKPSTSEPSTSE. Over residues 179-212 the composition is skewed to polar residues; that stretch reads IQTKPTTPQESTNIENSQPQPTPSKVDNQVTDAT. Residues 221 to 230 are compositionally biased toward basic and acidic residues; the sequence is SKEELKNNPE. CNA-B domains lie at 607–719, 720–829, and 830–940; these read LYKI…YKEP, KYNL…YKTP, and KYSL…EEDT. The disordered stretch occupies residues 904 to 1141; the sequence is VTNTTEDDKD…TGSENNGSNN (238 aa). Acidic residues-rich tracts occupy residues 908 to 918 and 935 to 1105; these read TEDDKDADGGE and YFEE…DSDS. Residues 1129–1133 carry the LPXTG sorting signal motif; that stretch reads LPETG. Position 1132 is a pentaglycyl murein peptidoglycan amidated threonine (Thr1132). Residues 1133 to 1166 constitute a propeptide, removed by sortase; that stretch reads GSENNGSNNATLFGGLFAALGSLLLFGRRKKQNK.

Belongs to the serine-aspartate repeat-containing protein (SDr) family. In terms of assembly, interacts with host complement factor H/CFAH (via C-terminus). Interacts with host complement regulator C4BPA.

Its subcellular location is the secreted. The protein resides in the cell wall. Its function is as follows. Cell surface-associated calcium-binding protein which plays an important role in adhesion and pathogenesis. Contributes to the resistance to killing by innate immune components in blood and thus attenuates bacterial clearance by interacting with host complement factor H/CFAH and modulating its activity. Inhibits also bacterial opsonization and killing by interacting with host complement regulator C4BPA and thus inhibiting classical complement pathway activation. The polypeptide is Serine-aspartate repeat-containing protein E (sdrE) (Staphylococcus aureus (strain Newman)).